We begin with the raw amino-acid sequence, 160 residues long: Cytochrome b6-f complex subunit 4 (160 aa).

The next 3 helical transmembrane spans lie at Leu36–Val56, Leu95–Glu115, and Thr131–Ile151.

Belongs to the cytochrome b family. PetD subfamily. The 4 large subunits of the cytochrome b6-f complex are cytochrome b6, subunit IV (17 kDa polypeptide, petD), cytochrome f and the Rieske protein, while the 4 small subunits are petG, petL, petM and petN. The complex functions as a dimer.

It is found in the plastid. The protein localises to the chloroplast thylakoid membrane. Functionally, component of the cytochrome b6-f complex, which mediates electron transfer between photosystem II (PSII) and photosystem I (PSI), cyclic electron flow around PSI, and state transitions. The polypeptide is Cytochrome b6-f complex subunit 4 (Oryza sativa (Rice)).